The following is a 242-amino-acid chain: ATP synthase subunit a (242 aa).

The next 6 helical transmembrane spans lie at 29–49, 84–104, 114–134, 140–160, 189–209, and 210–230; these read SAAYMLLASVLALTYFYLAFS, FVPVIFTLFVFILFCNLFGMI, IIITFALAILVFLMVTIVGFV, FLSLFLPHGTPLWLAPLMIII, VIASFVVTLMIYLKFLPIPLM, and VILIGFEIFVAILQAYIFTIL.

It belongs to the ATPase A chain family. F-type ATPases have 2 components, CF(1) - the catalytic core - and CF(0) - the membrane proton channel. CF(1) has five subunits: alpha(3), beta(3), gamma(1), delta(1), epsilon(1). CF(0) has three main subunits: a(1), b(2) and c(9-12). The alpha and beta chains form an alternating ring which encloses part of the gamma chain. CF(1) is attached to CF(0) by a central stalk formed by the gamma and epsilon chains, while a peripheral stalk is formed by the delta and b chains.

It localises to the cell inner membrane. In terms of biological role, key component of the proton channel; it plays a direct role in the translocation of protons across the membrane. The sequence is that of ATP synthase subunit a from Rickettsia bellii (strain RML369-C).